Consider the following 858-residue polypeptide: Phosphoenolpyruvate carboxylase (858 aa).

Active-site residues include histidine 145 and lysine 531.

It belongs to the PEPCase type 1 family. The cofactor is Mg(2+).

The enzyme catalyses oxaloacetate + phosphate = phosphoenolpyruvate + hydrogencarbonate. In terms of biological role, forms oxaloacetate, a four-carbon dicarboxylic acid source for the tricarboxylic acid cycle. This chain is Phosphoenolpyruvate carboxylase, found in Thermus thermophilus (strain ATCC BAA-163 / DSM 7039 / HB27).